A 60-amino-acid chain; its full sequence is Large ribosomal subunit protein uL30 (60 aa).

Belongs to the universal ribosomal protein uL30 family. As to quaternary structure, part of the 50S ribosomal subunit.

The chain is Large ribosomal subunit protein uL30 from Shewanella sp. (strain MR-7).